The chain runs to 500 residues: Probable malate:quinone oxidoreductase (500 aa).

Belongs to the MQO family. Requires FAD as cofactor.

It catalyses the reaction (S)-malate + a quinone = a quinol + oxaloacetate. It participates in carbohydrate metabolism; tricarboxylic acid cycle; oxaloacetate from (S)-malate (quinone route): step 1/1. The chain is Probable malate:quinone oxidoreductase from Bacillus mycoides (strain KBAB4) (Bacillus weihenstephanensis).